The sequence spans 427 residues: GTPase Obg (427 aa).

The 158-residue stretch at 1–158 (MFVDQVKIYV…RDVTLELKVL (158 aa)) folds into the Obg domain. The 171-residue stretch at 159-329 (ADVGLVGFPS…LLFEVANLLE (171 aa)) folds into the OBG-type G domain. GTP is bound by residues 165–172 (GFPSVGKS), 190–194 (FTTIV), 212–215 (DLPG), 282–285 (NKMD), and 310–312 (SAV). The Mg(2+) site is built by serine 172 and threonine 192. Residues 349–427 (YKFESESNFE…ILEYQFEFID (79 aa)) form the OCT domain.

It belongs to the TRAFAC class OBG-HflX-like GTPase superfamily. OBG GTPase family. In terms of assembly, monomer. The cofactor is Mg(2+).

Its subcellular location is the cytoplasm. An essential GTPase which binds GTP, GDP and possibly (p)ppGpp with moderate affinity, with high nucleotide exchange rates and a fairly low GTP hydrolysis rate. Plays a role in control of the cell cycle, stress response, ribosome biogenesis and in those bacteria that undergo differentiation, in morphogenesis control. This chain is GTPase Obg, found in Bacillus mycoides (strain KBAB4) (Bacillus weihenstephanensis).